The chain runs to 1334 residues: Nck-associated protein 5-like (1334 aa).

Disordered stretches follow at residues 1–28, 115–146, 210–234, 266–316, and 349–711; these read MSEA…MEPG, LPQI…APLP, TPWR…GPPQ, GEED…SPDT, and PLNG…MVPS. Residues 1-139 form a mediates interaction with CDK5RAP2 and is required for homodimerization and microtubule bundle formation region; the sequence is MSEAMDQPAG…PASPSLSSTE (139 aa). Residues 28-106 adopt a coiled-coil conformation; it reads GTCQELLHRL…NQMLSALFQQ (79 aa). Over residues 122-132 the composition is skewed to pro residues; the sequence is PLQPPSEPPAS. Positions 358–372 are enriched in polar residues; it reads GQSSSPDQAPPQLSK. Residues Ser-440, Ser-451, Ser-470, and Ser-477 each carry the phosphoserine; by CDK1 modification. Over residues 468–481 the composition is skewed to low complexity; it reads SPSPGGPQLSPQLP. Positions 484–487 match the (S/T)X(I/L)P motif 1 motif; that stretch reads SRIP. Residues Ser-493, Ser-496, and Ser-498 each carry the phosphoserine modification. Polar residues predominate over residues 519–547; the sequence is LPTSPSPCYTTPDSTQLRPPQSALSTTLS. Ser-571 and Ser-577 each carry phosphoserine; by CDK1. Positions 638–649 are enriched in polar residues; sequence PGNSSKKPSQGS. Phosphothreonine is present on Thr-659. The tract at residues 750-1146 is mediates interaction with beta-tubulin and is required for microtubule bundle formation; it reads RVYSSHSMGA…SGTPSKNLPK (397 aa). At Ser-767 the chain carries Phosphoserine; by CDK1. Positions 782-884 are disordered; sequence LAGALCPQVP…EGLAPHSAIE (103 aa). A compositionally biased stretch (low complexity) spans 810–825; sequence SPHSSPTKLPSKSPTK. Residues 816 to 819 carry the (S/T)X(I/L)P motif 2 motif; it reads TKLP. Positions 926 to 929 match the (S/T)X(I/L)P motif 3; required for interaction with MAPRE1 motif; the sequence is SKLP. Disordered stretches follow at residues 931-953, 986-1015, and 1030-1183; these read LNRR…LRRE, KAYL…QGQL, and LNRV…VPGI. The span at 933 to 942 shows a compositional bias: basic and acidic residues; the sequence is RRTEATKNKE. Positions 956-994 form a coiled coil; that stretch reads MEARKLEAESLNISKLMAKAEDLRRALEEEKAYLSSRAR. Basic and acidic residues predominate over residues 1033-1050; sequence VDGKELPSKSWREPKPEY. Low complexity predominate over residues 1079 to 1090; the sequence is GCGKPPGKPSSE. Positions 1110 to 1122 are enriched in polar residues; the sequence is SHFTACGSLTRTL. Positions 1152–1167 are enriched in pro residues; the sequence is LDPPPGVPPARPPPLT. Ser-1194 carries the post-translational modification Phosphoserine. Over residues 1197-1206 the composition is skewed to low complexity; it reads AFPALLPAAP. The interval 1197–1334 is disordered; it reads AFPALLPAAP…DSLSSCGSQG (138 aa). Residues 1235–1247 show a composition bias toward polar residues; sequence TFPNTRAAGSSSD. Low complexity predominate over residues 1313–1334; that stretch reads LETSESLSDSLYDSLSSCGSQG.

Homodimer. Interacts with CDK5RAP2. Interacts with MAPRE1. Interacts with beta-tubulin. Post-translationally, CDK1/Cyclin B-dependent phosphorylation mediates its dissociation from centrosomes during mitosis.

The protein localises to the cytoplasm. Its subcellular location is the cytoskeleton. It localises to the microtubule organizing center. The protein resides in the centrosome. In terms of biological role, regulates microtubule organization and stabilization. Promotes microtubule growth and bundling formation and stabilizes microtubules by increasing intense acetylation of microtubules. Both tubulin-binding and homodimer formation are required for NCKAP5L-mediated microtubule bundle formation. In Homo sapiens (Human), this protein is Nck-associated protein 5-like.